A 371-amino-acid chain; its full sequence is DNA replication and repair protein RecF (371 aa).

Residue 30-37 (GQNGSGKT) participates in ATP binding.

This sequence belongs to the RecF family.

It localises to the cytoplasm. In terms of biological role, the RecF protein is involved in DNA metabolism; it is required for DNA replication and normal SOS inducibility. RecF binds preferentially to single-stranded, linear DNA. It also seems to bind ATP. In Chlorobium phaeovibrioides (strain DSM 265 / 1930) (Prosthecochloris vibrioformis (strain DSM 265)), this protein is DNA replication and repair protein RecF.